The chain runs to 349 residues: 3-dehydroquinate synthase (349 aa).

Residues 63 to 68, 97 to 101, 121 to 122, K134, K143, and 161 to 164 each bind NAD(+); these read DGEDYK, GVIGD, TT, and FLQT. 3 residues coordinate Zn(2+): E176, H235, and H252.

The protein belongs to the sugar phosphate cyclases superfamily. Dehydroquinate synthase family. Co(2+) is required as a cofactor. It depends on Zn(2+) as a cofactor. The cofactor is NAD(+).

The protein resides in the cytoplasm. It carries out the reaction 7-phospho-2-dehydro-3-deoxy-D-arabino-heptonate = 3-dehydroquinate + phosphate. It functions in the pathway metabolic intermediate biosynthesis; chorismate biosynthesis; chorismate from D-erythrose 4-phosphate and phosphoenolpyruvate: step 2/7. Its function is as follows. Catalyzes the conversion of 3-deoxy-D-arabino-heptulosonate 7-phosphate (DAHP) to dehydroquinate (DHQ). This is 3-dehydroquinate synthase from Nitratiruptor sp. (strain SB155-2).